Here is a 167-residue protein sequence, read N- to C-terminus: uncharacterized protein (167 aa).

This is an uncharacterized protein from Xenopus laevis (African clawed frog).